A 225-amino-acid chain; its full sequence is 7-cyano-7-deazaguanine synthase (225 aa).

Residue 8–18 (VSGGADSATVL) participates in ATP binding. Cysteine 188, cysteine 198, cysteine 201, and cysteine 204 together coordinate Zn(2+).

The protein belongs to the QueC family. It depends on Zn(2+) as a cofactor.

The catalysed reaction is 7-carboxy-7-deazaguanine + NH4(+) + ATP = 7-cyano-7-deazaguanine + ADP + phosphate + H2O + H(+). It participates in purine metabolism; 7-cyano-7-deazaguanine biosynthesis. Catalyzes the ATP-dependent conversion of 7-carboxy-7-deazaguanine (CDG) to 7-cyano-7-deazaguanine (preQ(0)). This Rickettsia bellii (strain OSU 85-389) protein is 7-cyano-7-deazaguanine synthase.